The following is a 467-amino-acid chain: ATP synthase subunit beta (467 aa).

An ATP-binding site is contributed by 156-163; the sequence is GGAGVGKT.

The protein belongs to the ATPase alpha/beta chains family. As to quaternary structure, F-type ATPases have 2 components, CF(1) - the catalytic core - and CF(0) - the membrane proton channel. CF(1) has five subunits: alpha(3), beta(3), gamma(1), delta(1), epsilon(1). CF(0) has three main subunits: a(1), b(2) and c(9-12). The alpha and beta chains form an alternating ring which encloses part of the gamma chain. CF(1) is attached to CF(0) by a central stalk formed by the gamma and epsilon chains, while a peripheral stalk is formed by the delta and b chains.

The protein localises to the cell inner membrane. It carries out the reaction ATP + H2O + 4 H(+)(in) = ADP + phosphate + 5 H(+)(out). Its function is as follows. Produces ATP from ADP in the presence of a proton gradient across the membrane. The catalytic sites are hosted primarily by the beta subunits. The protein is ATP synthase subunit beta of Cupriavidus pinatubonensis (strain JMP 134 / LMG 1197) (Cupriavidus necator (strain JMP 134)).